A 300-amino-acid chain; its full sequence is Probable amino-acid ABC transporter periplasmic-binding protein y4tE (300 aa).

The signal sequence occupies residues 1–27 (MTHLKISKTAPAVARFLPAGRIASVAA).

It belongs to the bacterial solute-binding protein 3 family.

The protein localises to the periplasm. Probably part of the binding-protein-dependent transport system y4tEFGH for an amino acid. This is Probable amino-acid ABC transporter periplasmic-binding protein y4tE from Sinorhizobium fredii (strain NBRC 101917 / NGR234).